The primary structure comprises 166 residues: Interferon gamma (166 aa).

The first 23 residues, 1–23, serve as a signal peptide directing secretion; the sequence is MKYTSYFLALLLCVLLGFSGSYG. At Gln-24 the chain carries Pyrrolidone carboxylic acid. N-linked (GlcNAc...) asparagine glycans are attached at residues Asn-39 and Asn-106.

The protein belongs to the type II (or gamma) interferon family. In terms of assembly, homodimer. Interacts with IFNGR1 (via extracellular domain); this interaction promotes IFNGR1 dimerization. In terms of tissue distribution, released primarily from activated T lymphocytes.

Its subcellular location is the secreted. Its function is as follows. Type II interferon produced by immune cells such as T-cells and NK cells that plays crucial roles in antimicrobial, antiviral, and antitumor responses by activating effector immune cells and enhancing antigen presentation. Primarily signals through the JAK-STAT pathway after interaction with its receptor IFNGR1 to affect gene regulation. Upon IFNG binding, IFNGR1 intracellular domain opens out to allow association of downstream signaling components JAK2, JAK1 and STAT1, leading to STAT1 activation, nuclear translocation and transcription of IFNG-regulated genes. Many of the induced genes are transcription factors such as IRF1 that are able to further drive regulation of a next wave of transcription. Plays a role in class I antigen presentation pathway by inducing a replacement of catalytic proteasome subunits with immunoproteasome subunits. In turn, increases the quantity, quality, and repertoire of peptides for class I MHC loading. Increases the efficiency of peptide generation also by inducing the expression of activator PA28 that associates with the proteasome and alters its proteolytic cleavage preference. Up-regulates as well MHC II complexes on the cell surface by promoting expression of several key molecules such as cathepsins B/CTSB, H/CTSH, and L/CTSL. Participates in the regulation of hematopoietic stem cells during development and under homeostatic conditions by affecting their development, quiescence, and differentiation. This chain is Interferon gamma (IFNG), found in Bos indicus (Zebu).